A 544-amino-acid polypeptide reads, in one-letter code: Prolyl 4-hydroxylase subunit alpha-3 (544 aa).

Residues 1–24 (MGPGARLAALLVLLKLGVGDPAAA) form the signal peptide. Residues 227–260 (EDALDYLAFACYQVGNVSCALSLSREFLVYSPDN) form a TPR repeat. N-linked (GlcNAc...) asparagine glycosylation is present at asparagine 242. The Fe2OG dioxygenase domain occupies 422-529 (YAEYLQVVNY…KWVANKWIHE (108 aa)). 2 residues coordinate Fe cation: histidine 440 and aspartate 442. Residue asparagine 482 is glycosylated (N-linked (GlcNAc...) asparagine). Residue histidine 510 coordinates Fe cation. Lysine 520 contacts 2-oxoglutarate.

The protein belongs to the P4HA family. In terms of assembly, heterotetramer of two alpha-3 chains and two beta chains (the beta chain is the multi-functional PDI). It depends on Fe(2+) as a cofactor. L-ascorbate serves as cofactor. N-glycosylation plays no role in the catalytic activity.

It is found in the endoplasmic reticulum lumen. It carries out the reaction L-prolyl-[collagen] + 2-oxoglutarate + O2 = trans-4-hydroxy-L-prolyl-[collagen] + succinate + CO2. Catalyzes the post-translational formation of 4-hydroxyproline in -Xaa-Pro-Gly- sequences in collagens and other proteins. The protein is Prolyl 4-hydroxylase subunit alpha-3 (P4ha3) of Rattus norvegicus (Rat).